Reading from the N-terminus, the 638-residue chain is 1-deoxy-D-xylulose-5-phosphate synthase (638 aa).

Thiamine diphosphate-binding positions include His75 and 116–118; that span reads AHS. Asp147 is a Mg(2+) binding site. Residues 148 to 149, Asn177, Tyr288, and Glu370 contribute to the thiamine diphosphate site; that span reads GA. Asn177 contributes to the Mg(2+) binding site.

It belongs to the transketolase family. DXPS subfamily. As to quaternary structure, homodimer. Mg(2+) serves as cofactor. It depends on thiamine diphosphate as a cofactor.

It carries out the reaction D-glyceraldehyde 3-phosphate + pyruvate + H(+) = 1-deoxy-D-xylulose 5-phosphate + CO2. The protein operates within metabolic intermediate biosynthesis; 1-deoxy-D-xylulose 5-phosphate biosynthesis; 1-deoxy-D-xylulose 5-phosphate from D-glyceraldehyde 3-phosphate and pyruvate: step 1/1. In terms of biological role, catalyzes the acyloin condensation reaction between C atoms 2 and 3 of pyruvate and glyceraldehyde 3-phosphate to yield 1-deoxy-D-xylulose-5-phosphate (DXP). The sequence is that of 1-deoxy-D-xylulose-5-phosphate synthase from Cupriavidus taiwanensis (strain DSM 17343 / BCRC 17206 / CCUG 44338 / CIP 107171 / LMG 19424 / R1) (Ralstonia taiwanensis (strain LMG 19424)).